The sequence spans 819 residues: NEDD4-binding protein 1 (819 aa).

Residues 1–13 (MASGSVQSSSGNG) show a composition bias toward polar residues. The disordered stretch occupies residues 1–20 (MASGSVQSSSGNGRRQAAVV). Positions 80 to 164 (KQAVRRAKEY…VQQFIALFKD (85 aa)) constitute a KH-like domain. The segment covering 226–241 (DDKAECKVNQKDEVSR) has biased composition (basic and acidic residues). 2 disordered regions span residues 226 to 247 (DDKA…AGTP) and 666 to 736 (KLDD…MAPR). The RNase NYN domain maps to 517–669 (LKHIIIDGSN…LGRYGPKLDD (153 aa)). The segment covering 673-689 (KQPNNRTVHSSFPSSNE) has biased composition (polar residues). Residues 772–819 (RSPSETMQLKEALLKIFPEADQRHKINEILTAHPFMRDLNALSAMVLD) form a coCUN region.

It belongs to the N4BP1 family.

It localises to the cytoplasm. It is found in the cytosol. The protein localises to the nucleus. Its subcellular location is the nucleolus. The protein resides in the PML body. Its function is as follows. Potent suppressor of cytokine production that acts as a regulator of innate immune signaling and inflammation. Acts as a key negative regulator of select cytokine and chemokine responses elicited by TRIF-independent Toll-like receptors (TLRs), thereby limiting inflammatory cytokine responses to minor insults. Has ribonuclease activity. This chain is NEDD4-binding protein 1, found in Xenopus tropicalis (Western clawed frog).